The primary structure comprises 257 residues: Ditrans,polycis-undecaprenyl-diphosphate synthase ((2E,6E)-farnesyl-diphosphate specific) (257 aa).

Residue D34 is part of the active site. Position 34 (D34) interacts with Mg(2+). Residues 35–38 (GNGR), W39, R47, and H51 contribute to the substrate site. N82 serves as the catalytic Proton acceptor. Residues W83, R85, R201, and 207–209 (RLS) contribute to the substrate site. Residue E220 coordinates Mg(2+).

Belongs to the UPP synthase family. In terms of assembly, homodimer. The cofactor is Mg(2+).

It catalyses the reaction 8 isopentenyl diphosphate + (2E,6E)-farnesyl diphosphate = di-trans,octa-cis-undecaprenyl diphosphate + 8 diphosphate. Its function is as follows. Catalyzes the sequential condensation of isopentenyl diphosphate (IPP) with (2E,6E)-farnesyl diphosphate (E,E-FPP) to yield (2Z,6Z,10Z,14Z,18Z,22Z,26Z,30Z,34E,38E)-undecaprenyl diphosphate (di-trans,octa-cis-UPP). UPP is the precursor of glycosyl carrier lipid in the biosynthesis of bacterial cell wall polysaccharide components such as peptidoglycan and lipopolysaccharide. This chain is Ditrans,polycis-undecaprenyl-diphosphate synthase ((2E,6E)-farnesyl-diphosphate specific), found in Francisella tularensis subsp. tularensis (strain SCHU S4 / Schu 4).